The sequence spans 179 residues: Dual-action ribosomal maturation protein DarP (179 aa).

The protein belongs to the DarP family.

The protein localises to the cytoplasm. Functionally, member of a network of 50S ribosomal subunit biogenesis factors which assembles along the 30S-50S interface, preventing incorrect 23S rRNA structures from forming. Promotes peptidyl transferase center (PTC) maturation. The polypeptide is Dual-action ribosomal maturation protein DarP (Photorhabdus laumondii subsp. laumondii (strain DSM 15139 / CIP 105565 / TT01) (Photorhabdus luminescens subsp. laumondii)).